A 426-amino-acid chain; its full sequence is CAAX prenyl protease 1 homolog (426 aa).

The Lumenal portion of the chain corresponds to 1–3 (MVN). Residues 4-24 (YFIISISFFLLEHFYSFYLNF) form a helical membrane-spanning segment. Over 25 to 70 (RQSKLLKNLTKVPEYCKDRITQEDFKKSQEYSKAKLDYKTLTSTIQ) the chain is Cytoplasmic. A helical membrane pass occupies residues 71 to 91 (VLTTLLSFYYPVYPYFWNLSL). The Lumenal portion of the chain corresponds to 92–106 (ELAEKIGYPNEIIRS). The chain crosses the membrane as a helical span at residues 107 to 127 (CFFFAFTVGVSVITEIPFSYY). Residues 128–150 (YQFILEEKFGYNRMTRTLFIKDK) are Cytoplasmic-facing. A helical transmembrane segment spans residues 151–171 (IISTLLMIGFGLPILSLAIFI). Topologically, residues 172–178 (INWSGPQ) are lumenal. Residues 179–199 (LWFYCWLLLVAITLLSITIYP) traverse the membrane as a helical segment. Residues 200–294 (TFIQPLFNKF…GHYKMSHTLK (95 aa)) lie on the Cytoplasmic side of the membrane. Residue His282 participates in Zn(2+) binding. Glu283 is a catalytic residue. His286 contacts Zn(2+). A helical transmembrane segment spans residues 295–315 (QMLLVQVHLVTLLYAFSLLIN). Over 316–333 (DDQLYQQFGFVSSKDSVL) the chain is Lumenal. The chain crosses the membrane as a helical span at residues 334 to 354 (VGLTLFMFLYSPIDRIFSLLI). At 355 to 426 (NIFSRKYEFQ…KVALYKLKNK (72 aa)) the chain is on the cytoplasmic side. Glu362 is a binding site for Zn(2+).

This sequence belongs to the peptidase M48B family. The cofactor is Zn(2+).

Its subcellular location is the endoplasmic reticulum membrane. The catalysed reaction is Hydrolyzes the peptide bond -P2-(S-farnesyl or geranylgeranyl)C-P1'-P2'-P3'-COOH where P1' and P2' are amino acids with aliphatic side chains and P3' is any C-terminal residue.. Functionally, proteolytically removes the C-terminal three residues of farnesylated proteins. The chain is CAAX prenyl protease 1 homolog (zmpste24) from Dictyostelium discoideum (Social amoeba).